A 791-amino-acid polypeptide reads, in one-letter code: Probable phosphoketolase (791 aa).

Belongs to the XFP family. It depends on thiamine diphosphate as a cofactor.

This chain is Probable phosphoketolase, found in Pseudomonas putida (strain ATCC 700007 / DSM 6899 / JCM 31910 / BCRC 17059 / LMG 24140 / F1).